The sequence spans 30 residues: Photosystem I reaction center subunit XII (30 aa).

Residues 5 to 25 (SQIFFALCIALTAAVLAIGLG) form a helical membrane-spanning segment.

Belongs to the PsaM family.

It localises to the plastid. It is found in the chloroplast thylakoid membrane. In Emiliania huxleyi (Coccolithophore), this protein is Photosystem I reaction center subunit XII.